We begin with the raw amino-acid sequence, 347 residues long: MNPLIFTMILLTVMLGTAIVMTTSHWVMAWIGFEMNMLAIIPILMKKYNPRSMEASTKYFLTQATASMLLMLAIVINLTYSGQWSMTKPLNSTASIIMTLAMAMKLGLAPFHFWVPEVTQGVQLSSGLILLTWQKLAPMSILYQISPTINLDLLLLMSILSILVGGWGGLNQTQLRKILAYSSIAHMGWMTAIMVYNPTMALLNLAIYILLTTTTFVMLMVDSSTTTLSLSHMWNKMPLLTTAILTIMLSLGGLPPLSGFTPKWMIIQEMTKNDSMITPTIMAVMTLLNLYFYMRLTYSTSLTMFPSTNNMKVKWQFNNKKLTANLSPLIILSTLILPLSPMLALLE.

The next 11 membrane-spanning stretches (helical) occupy residues 3–23, 25–45, 59–79, 96–116, 122–142, 149–169, 178–198, 201–221, 237–257, 274–294, and 326–346; these read PLIFTMILLTVMLGTAIVMTT, HWVMAWIGFEMNMLAIIPILM, YFLTQATASMLLMLAIVINLT, IIMTLAMAMKLGLAPFHFWVP, VQLSSGLILLTWQKLAPMSIL, INLDLLLLMSILSILVGGWGG, ILAYSSIAHMGWMTAIMVYNP, ALLNLAIYILLTTTTFVMLMV, MPLLTTAILTIMLSLGGLPPL, DSMITPTIMAVMTLLNLYFYM, and LSPLIILSTLILPLSPMLALL.

It belongs to the complex I subunit 2 family. Core subunit of respiratory chain NADH dehydrogenase (Complex I) which is composed of 45 different subunits. Interacts with TMEM242.

The protein resides in the mitochondrion inner membrane. It catalyses the reaction a ubiquinone + NADH + 5 H(+)(in) = a ubiquinol + NAD(+) + 4 H(+)(out). In terms of biological role, core subunit of the mitochondrial membrane respiratory chain NADH dehydrogenase (Complex I) which catalyzes electron transfer from NADH through the respiratory chain, using ubiquinone as an electron acceptor. Essential for the catalytic activity and assembly of complex I. The sequence is that of NADH-ubiquinone oxidoreductase chain 2 from Nyctimene aello (Broad-striped tube-nosed fruit bat).